The following is a 362-amino-acid chain: sn-glycerol-3-phosphate import ATP-binding protein UgpC (362 aa).

Residues 4-235 (LTLQSVKKTY…PATVFVASFI (232 aa)) enclose the ABC transporter domain. 37-44 (GPSGCGKS) contacts ATP.

This sequence belongs to the ABC transporter superfamily. sn-glycerol-3-phosphate importer (TC 3.A.1.1.3) family. As to quaternary structure, the complex is composed of two ATP-binding proteins (UgpC), two transmembrane proteins (UgpA and UgpE) and a solute-binding protein (UgpB).

It is found in the cell inner membrane. The catalysed reaction is sn-glycerol 3-phosphate(out) + ATP + H2O = sn-glycerol 3-phosphate(in) + ADP + phosphate + H(+). Functionally, part of the ABC transporter complex UgpBAEC involved in sn-glycerol-3-phosphate (G3P) import. Responsible for energy coupling to the transport system. In Paraburkholderia xenovorans (strain LB400), this protein is sn-glycerol-3-phosphate import ATP-binding protein UgpC.